The following is a 398-amino-acid chain: Succinate--CoA ligase [ADP-forming] subunit beta (398 aa).

The ATP-grasp domain occupies 9 to 254 (KALLKSYGAP…TTEEDDKEIE (246 aa)). Residues Lys-46, 53–55 (GRG), Glu-109, Ala-112, and Glu-117 each bind ATP. Mg(2+)-binding residues include Asn-209 and Asp-223. Substrate-binding positions include Asn-274 and 331-333 (GIM).

Belongs to the succinate/malate CoA ligase beta subunit family. In terms of assembly, heterotetramer of two alpha and two beta subunits. The cofactor is Mg(2+).

It catalyses the reaction succinate + ATP + CoA = succinyl-CoA + ADP + phosphate. The enzyme catalyses GTP + succinate + CoA = succinyl-CoA + GDP + phosphate. Its pathway is carbohydrate metabolism; tricarboxylic acid cycle; succinate from succinyl-CoA (ligase route): step 1/1. Functionally, succinyl-CoA synthetase functions in the citric acid cycle (TCA), coupling the hydrolysis of succinyl-CoA to the synthesis of either ATP or GTP and thus represents the only step of substrate-level phosphorylation in the TCA. The beta subunit provides nucleotide specificity of the enzyme and binds the substrate succinate, while the binding sites for coenzyme A and phosphate are found in the alpha subunit. In Rhizobium meliloti (strain 1021) (Ensifer meliloti), this protein is Succinate--CoA ligase [ADP-forming] subunit beta.